A 445-amino-acid polypeptide reads, in one-letter code: tRNA modification GTPase MnmE (445 aa).

Residues R20, E79, and K119 each coordinate (6S)-5-formyl-5,6,7,8-tetrahydrofolate. Residues 215–371 enclose the TrmE-type G domain; it reads GLKLAIVGPP…ILKNIENIAE (157 aa). N225 serves as a coordination point for K(+). Residues 225–230, 244–250, and 269–272 each bind GTP; these read NTGKSS, SNIAGTT, and DTAG. Position 229 (S229) interacts with Mg(2+). Residues S244, I246, and T249 each coordinate K(+). T250 is a Mg(2+) binding site. K445 is a (6S)-5-formyl-5,6,7,8-tetrahydrofolate binding site.

This sequence belongs to the TRAFAC class TrmE-Era-EngA-EngB-Septin-like GTPase superfamily. TrmE GTPase family. In terms of assembly, homodimer. Heterotetramer of two MnmE and two MnmG subunits. It depends on K(+) as a cofactor.

The protein resides in the cytoplasm. Functionally, exhibits a very high intrinsic GTPase hydrolysis rate. Involved in the addition of a carboxymethylaminomethyl (cmnm) group at the wobble position (U34) of certain tRNAs, forming tRNA-cmnm(5)s(2)U34. This chain is tRNA modification GTPase MnmE, found in Rickettsia akari (strain Hartford).